Reading from the N-terminus, the 306-residue chain is MTRKIRCALIGPGNIGTDLLAKLMRSPVLEPVWMVGIDPDSDGLKRARELGLKTTAEGVDGLLPHVQADAVQIAFDATSAYVHAENSRKLNALGVLMIDLTPAAIGPYCVPPVNLMDHIGSGEMNVNMVTCGGQATIPMVRAVSRVQPVAYGEIVATVSSRSVGPGTRKNIDEFTRTTAAAVAQVGGAKDGKAIIVINPADPPLIMRDTVHCLTETAPDEARIVESVHAMIADVQRYVPGYRLVNGPVFDGNRVSIYLEVEGLGDYLPKYAGNLDIMTAAAARTAEMFAEELLAGRLALQPAAQAA.

Cysteine 131 acts as the Acyl-thioester intermediate in catalysis. NAD(+) contacts are provided by residues 162–170 (SVGPGTRKN) and asparagine 273.

It belongs to the acetaldehyde dehydrogenase family.

The enzyme catalyses acetaldehyde + NAD(+) + CoA = acetyl-CoA + NADH + H(+). The sequence is that of Acetaldehyde dehydrogenase 3 from Burkholderia lata (strain ATCC 17760 / DSM 23089 / LMG 22485 / NCIMB 9086 / R18194 / 383).